The following is a 1053-amino-acid chain: DNA-directed RNA polymerase subunit beta' (1053 aa).

Zn(2+) is bound by residues C60, C62, C75, and C78. Residues D449, D451, and D453 each contribute to the Mg(2+) site. The Zn(2+) site is built by C818, C892, C899, and C902.

Belongs to the RNA polymerase beta' chain family. As to quaternary structure, the RNAP catalytic core consists of 2 alpha, 1 beta, 1 beta' and 1 omega subunit. When a sigma factor is associated with the core the holoenzyme is formed, which can initiate transcription. Mg(2+) is required as a cofactor. It depends on Zn(2+) as a cofactor.

The catalysed reaction is RNA(n) + a ribonucleoside 5'-triphosphate = RNA(n+1) + diphosphate. DNA-dependent RNA polymerase catalyzes the transcription of DNA into RNA using the four ribonucleoside triphosphates as substrates. In Listeria grayi (Listeria murrayi), this protein is DNA-directed RNA polymerase subunit beta'.